The sequence spans 1389 residues: uncharacterized protein (1389 aa).

Residues 43–94 (STIAQRVSQLENEVAEINVALAEHVNELNSQEKRIDKLEKTVKKKKSNCSDD) adopt a coiled-coil conformation. Residues 294 to 353 (HKNRRSKSDNSDLSEYSSSNSDDSECTDSDGSSCSTDGSPDCTESENTESHRSHGKKKHR) form a disordered region. Composition is skewed to low complexity over residues 304-314 (SDLSEYSSSNS) and 322-335 (SDGSSCSTDGSPDC). 3 WD repeats span residues 867–907 (TFTD…VKHI), 1017–1056 (GYNEGLDIKYSPDQTIVVSGYYNTNPLIIYDGPDGLTPSG), and 1115–1156 (GISN…ILST).

Its subcellular location is the virion. This is an uncharacterized protein from Acanthamoeba polyphaga (Amoeba).